Consider the following 809-residue polypeptide: Origin of replication complex subunit 1A (809 aa).

The segment covering 1 to 47 (MASSLSSKAKTFKSPTKTPTKMYRKSYLSPSSTSLTPPQTPETLTPL) has biased composition (low complexity). The segment at 1–69 (MASSLSSKAK…LGNDPIDLPG (69 aa)) is disordered. The histone H3 binding stretch occupies residues 160-185 (DPEIEDCQICFKSHTNTIMIECDDCL). A PHD-type zinc finger spans residues 163 to 213 (IEDCQICFKSHTNTIMIECDDCLGGFHLNCLKPPLKEVPEGDWICQFCEVK). Zn(2+)-binding residues include cysteine 166, cysteine 169, cysteine 181, cysteine 184, histidine 189, and cysteine 192. A histone H3 binding region spans residues 201 to 205 (PEGDW). Zn(2+) is bound by residues cysteine 207 and cysteine 210. The region spanning 223-341 (PKPPEGKKLA…VHWGSFKRVA (119 aa)) is the BAH domain. Positions 316–321 (ASNDGD) are histone H3 binding. Residues 431–799 (PKSLPCRSKE…DDVAFALKDN (369 aa)) are necessary and sufficient for ORC complex assembly. Residues 466–473 (GVPGTGKT) and 466–474 (GVPGTGKTI) each bind ATP. Mg(2+)-binding residues include aspartate 556 and glutamate 557. ATP is bound by residues glutamate 557, asparagine 590, and arginine 655.

The protein belongs to the ORC1 family. In terms of assembly, component of the origin recognition complex (ORC) composed of at least ORC1 (ORC1A or ORC1B), ORC2, ORC3, ORC4, ORC5 and ORC6. ORC is regulated in a cell-cycle and development dependent manner. It is sequentially assembled at the exit from anaphase of mitosis and disassembled as cells enter S phase. Interacts directly with ORC2, ORC3, ORC4 and ORC5. Binds mostly unmodified histone H3, and, with lower efficiency, H3K4me1 H3K4me2 and H3K4me3. As to expression, follow a cell-cycle regulation with a peak at the G1/S-phase. Mostly expressed in siliques, flowers and flower buds, and, to a lower extent, in roots, leaves and stems.

It localises to the nucleus. In terms of biological role, essential protein. Component of the origin recognition complex (ORC) that binds origins of replication. It has a role in both chromosomal replication and mating type transcriptional silencing. Binds to the ARS consensus sequence (ACS) of origins of replication. H3K4me3 effector that positively regulates the transcription of a subset of genes. This Arabidopsis thaliana (Mouse-ear cress) protein is Origin of replication complex subunit 1A.